The chain runs to 290 residues: Acetylglutamate kinase (290 aa).

Substrate is bound by residues 64–65 (GG), R86, and N183.

This sequence belongs to the acetylglutamate kinase family. ArgB subfamily.

The protein localises to the cytoplasm. It catalyses the reaction N-acetyl-L-glutamate + ATP = N-acetyl-L-glutamyl 5-phosphate + ADP. It participates in amino-acid biosynthesis; L-arginine biosynthesis; N(2)-acetyl-L-ornithine from L-glutamate: step 2/4. Catalyzes the ATP-dependent phosphorylation of N-acetyl-L-glutamate. This is Acetylglutamate kinase from Halothermothrix orenii (strain H 168 / OCM 544 / DSM 9562).